We begin with the raw amino-acid sequence, 118 residues long: Large ribosomal subunit protein uL22 (118 aa).

The protein belongs to the universal ribosomal protein uL22 family. As to quaternary structure, part of the 50S ribosomal subunit.

Its function is as follows. This protein binds specifically to 23S rRNA; its binding is stimulated by other ribosomal proteins, e.g. L4, L17, and L20. It is important during the early stages of 50S assembly. It makes multiple contacts with different domains of the 23S rRNA in the assembled 50S subunit and ribosome. In terms of biological role, the globular domain of the protein is located near the polypeptide exit tunnel on the outside of the subunit, while an extended beta-hairpin is found that lines the wall of the exit tunnel in the center of the 70S ribosome. The protein is Large ribosomal subunit protein uL22 of Synechococcus sp. (strain RCC307).